Reading from the N-terminus, the 670-residue chain is uncharacterized protein (670 aa).

A disordered region spans residues P53 to P83. Tandem repeats lie at residues A143–T158, A171–T186, A200–P214, A215–P233, A234–P252, A253–T268, T279–P293, A294–T309, T320–P334, A335–P349, A362–P376, A377–P391, A392–P406, A407–P421, A422–P436, A437–T452, V464–T477, A478–T493, A504–T517, A518–T531, A532–T545, A546–T559, A560–T573, A574–T587, A588–T601, A602–T615, and A616–T629. Residues P187–N225 form a disordered region. A compositionally biased stretch (low complexity) spans A205–N225. The tract at residues G339–T395 is disordered. Over residues D342–A362 the composition is skewed to polar residues. Residues M363–T395 are compositionally biased toward low complexity. Low complexity-rich tracts occupy residues G471 to G482 and T490 to T503. Positions G471–T503 are disordered. Positions G525–G634 are enriched in low complexity. A disordered region spans residues G525 to R670. Basic residues predominate over residues G638 to G654.

This is an uncharacterized protein from Ictalurid herpesvirus 1 (strain Auburn) (IcHV-1).